A 243-amino-acid chain; its full sequence is Leucyl/phenylalanyl-tRNA--protein transferase (243 aa).

Positions 1 to 22 are disordered; sequence MHSQPYLLSPTPNTPFPPAEHA.

This sequence belongs to the L/F-transferase family.

Its subcellular location is the cytoplasm. It catalyses the reaction N-terminal L-lysyl-[protein] + L-leucyl-tRNA(Leu) = N-terminal L-leucyl-L-lysyl-[protein] + tRNA(Leu) + H(+). The catalysed reaction is N-terminal L-arginyl-[protein] + L-leucyl-tRNA(Leu) = N-terminal L-leucyl-L-arginyl-[protein] + tRNA(Leu) + H(+). It carries out the reaction L-phenylalanyl-tRNA(Phe) + an N-terminal L-alpha-aminoacyl-[protein] = an N-terminal L-phenylalanyl-L-alpha-aminoacyl-[protein] + tRNA(Phe). In terms of biological role, functions in the N-end rule pathway of protein degradation where it conjugates Leu, Phe and, less efficiently, Met from aminoacyl-tRNAs to the N-termini of proteins containing an N-terminal arginine or lysine. This Xylella fastidiosa (strain M23) protein is Leucyl/phenylalanyl-tRNA--protein transferase.